The primary structure comprises 539 residues: Trigger factor (539 aa).

The 90-residue stretch at 163–252 (GDQLTVQIET…VLDVQERLLP (90 aa)) folds into the PPIase FKBP-type domain. 2 stretches are compositionally biased toward low complexity: residues 434-447 (SFEQ…ASEP) and 475-484 (AASPEAASEP). A disordered region spans residues 434–539 (SFEQAASPEA…DVATPEARTE (106 aa)). A compositionally biased stretch (polar residues) spans 509 to 528 (TETPIVSQEENGESVENQSV).

Belongs to the FKBP-type PPIase family. Tig subfamily.

Its subcellular location is the cytoplasm. It carries out the reaction [protein]-peptidylproline (omega=180) = [protein]-peptidylproline (omega=0). Involved in protein export. Acts as a chaperone by maintaining the newly synthesized protein in an open conformation. Functions as a peptidyl-prolyl cis-trans isomerase. The chain is Trigger factor from Roseiflexus sp. (strain RS-1).